A 108-amino-acid polypeptide reads, in one-letter code: DNA-binding protein HBbu (108 aa).

Belongs to the bacterial histone-like protein family.

Histone-like DNA-binding protein which is capable of wrapping DNA to stabilize it, and thus to prevent its denaturation under extreme environmental conditions. The protein is DNA-binding protein HBbu (hbb) of Borrelia parkeri.